The following is a 99-amino-acid chain: Integration host factor subunit alpha (99 aa).

The interval 49–75 is disordered; sequence FGNFDLRDKNQRPGRNPKTGEDIPITA.

Belongs to the bacterial histone-like protein family. As to quaternary structure, heterodimer of an alpha and a beta chain.

This protein is one of the two subunits of integration host factor, a specific DNA-binding protein that functions in genetic recombination as well as in transcriptional and translational control. This chain is Integration host factor subunit alpha, found in Klebsiella pneumoniae (strain 342).